We begin with the raw amino-acid sequence, 346 residues long: Uricase (346 aa).

A disordered region spans residues 1–23; that stretch reads MFATPLRQPTNASGARPAVSMDG. Catalysis depends on charge relay system residues K39 and T84. Positions 84, 85, 208, 225, 273, 274, and 300 each coordinate urate. H302 serves as the catalytic Charge relay system. The Microbody targeting signal motif lies at 344 to 346; it reads SHL.

It belongs to the uricase family. As to expression, malpighian tubules.

The protein resides in the peroxisome. It carries out the reaction urate + O2 + H2O = 5-hydroxyisourate + H2O2. The protein operates within purine metabolism; urate degradation; (S)-allantoin from urate: step 1/3. Its activity is regulated as follows. Repressed by 20-hydroxyecdysone. Its function is as follows. Catalyzes the oxidation of uric acid to 5-hydroxyisourate, which is further processed to form (S)-allantoin. The chain is Uricase (Uro) from Drosophila pseudoobscura pseudoobscura (Fruit fly).